Consider the following 379-residue polypeptide: Cytochrome b (379 aa).

The next 4 helical transmembrane spans lie at 33-53 (FGSLLGMCLMIQILTGLFLAM), 77-98 (WLIRYLHANGASMFFICLFIHV), 113-133 (WNIGIILFFTTMATAFVGYVL), and 178-198 (FFAFHFILPFIITAFVLVHLL). Residues His83 and His97 each coordinate heme b. Residues His182 and His196 each coordinate heme b. Position 201 (His201) interacts with a ubiquinone. 4 helical membrane-spanning segments follow: residues 226–246 (IKDLLGILFLLMALMILALFF), 288–308 (LGGVLALLLSILILMAFPLLN), 320–340 (ITQIIYWILIANLLVLTWIGG), and 347–367 (FTMIGQIASITYFTIILILMP).

This sequence belongs to the cytochrome b family. As to quaternary structure, the cytochrome bc1 complex contains 11 subunits: 3 respiratory subunits (MT-CYB, CYC1 and UQCRFS1), 2 core proteins (UQCRC1 and UQCRC2) and 6 low-molecular weight proteins (UQCRH/QCR6, UQCRB/QCR7, UQCRQ/QCR8, UQCR10/QCR9, UQCR11/QCR10 and a cleavage product of UQCRFS1). This cytochrome bc1 complex then forms a dimer. Heme b is required as a cofactor.

Its subcellular location is the mitochondrion inner membrane. Its function is as follows. Component of the ubiquinol-cytochrome c reductase complex (complex III or cytochrome b-c1 complex) that is part of the mitochondrial respiratory chain. The b-c1 complex mediates electron transfer from ubiquinol to cytochrome c. Contributes to the generation of a proton gradient across the mitochondrial membrane that is then used for ATP synthesis. This is Cytochrome b (MT-CYB) from Akodon dayi (Day's grass mouse).